We begin with the raw amino-acid sequence, 90 residues long: Small ribosomal subunit protein bS16 (90 aa).

Belongs to the bacterial ribosomal protein bS16 family.

This chain is Small ribosomal subunit protein bS16, found in Lactobacillus gasseri (strain ATCC 33323 / DSM 20243 / BCRC 14619 / CIP 102991 / JCM 1131 / KCTC 3163 / NCIMB 11718 / NCTC 13722 / AM63).